A 229-amino-acid chain; its full sequence is Type III pantothenate kinase (229 aa).

7 to 14 contacts ATP; that stretch reads DVGNSSVD. Residues tyrosine 78 and 85–88 contribute to the substrate site; that span reads GTDR. The active-site Proton acceptor is aspartate 87. Residue threonine 110 participates in ATP binding. Threonine 161 serves as a coordination point for substrate.

The protein belongs to the type III pantothenate kinase family. Homodimer. NH4(+) is required as a cofactor. The cofactor is K(+).

It localises to the cytoplasm. The catalysed reaction is (R)-pantothenate + ATP = (R)-4'-phosphopantothenate + ADP + H(+). Its pathway is cofactor biosynthesis; coenzyme A biosynthesis; CoA from (R)-pantothenate: step 1/5. Functionally, catalyzes the phosphorylation of pantothenate (Pan), the first step in CoA biosynthesis. The sequence is that of Type III pantothenate kinase from Aquifex aeolicus (strain VF5).